Here is a 202-residue protein sequence, read N- to C-terminus: Peptide methionine sulfoxide reductase B2, chloroplastic (202 aa).

Residues 1 to 63 (MAFNIITPGR…RRGFHGGRIV (63 aa)) constitute a chloroplast transit peptide. Residues 77 to 198 (EEEWRAILSP…NSISLKFTPE (122 aa)) enclose the MsrB domain. Residues C116, C119, C162, and C165 each coordinate Zn(2+). A disulfide bridge connects residues C134 and C187. The Nucleophile role is filled by C187.

Belongs to the MsrB Met sulfoxide reductase family. Zn(2+) is required as a cofactor. As to expression, expressed in stems, young leaves, floral buds and flowers. Expressed at low levels in roots, mature leaves and siliques (at protein level).

It is found in the plastid. It localises to the chloroplast. It carries out the reaction L-methionyl-[protein] + [thioredoxin]-disulfide + H2O = L-methionyl-(R)-S-oxide-[protein] + [thioredoxin]-dithiol. Its function is as follows. Catalyzes the reduction of methionine sulfoxide (MetSO) to methionine in proteins. Specifically reduces the MetSO R-enantiomer. Plays a protective role against oxidative stress by restoring activity to proteins that have been inactivated by methionine oxidation. May play an essential function in association with MSRB1 in maintaining vegetative growth during environmental constraints, through the preservation of photosynthetic antennae. MSRB1 and MSRB2 account for most of the leaf peptide MSR capacity. The sequence is that of Peptide methionine sulfoxide reductase B2, chloroplastic from Arabidopsis thaliana (Mouse-ear cress).